The following is a 309-amino-acid chain: D-alanine--D-alanine ligase (309 aa).

The region spanning 105–304 (KQIWHSVGLP…FNDLVERILA (200 aa)) is the ATP-grasp domain. 135–190 (LQELGGRVIVKPAREGSSIGMSIADNGRSLALALQHAAEFDDDLLVEQWVEGAEYT) contacts ATP. Residues aspartate 258, glutamate 271, and asparagine 273 each coordinate Mg(2+).

The protein belongs to the D-alanine--D-alanine ligase family. Requires Mg(2+) as cofactor. The cofactor is Mn(2+).

The protein localises to the cytoplasm. It carries out the reaction 2 D-alanine + ATP = D-alanyl-D-alanine + ADP + phosphate + H(+). Its pathway is cell wall biogenesis; peptidoglycan biosynthesis. Cell wall formation. This is D-alanine--D-alanine ligase from Idiomarina loihiensis (strain ATCC BAA-735 / DSM 15497 / L2-TR).